The sequence spans 275 residues: NH(3)-dependent NAD(+) synthetase (275 aa).

Residue Gly47–Ser54 participates in ATP binding. Asp53 is a binding site for Mg(2+). Residue Arg141 participates in deamido-NAD(+) binding. Thr161 is an ATP binding site. Glu166 serves as a coordination point for Mg(2+). Residues Lys174 and Asp181 each contribute to the deamido-NAD(+) site. Residues Lys190 and Thr212 each coordinate ATP. Deamido-NAD(+) is bound at residue His261 to Lys262.

This sequence belongs to the NAD synthetase family. Homodimer.

It catalyses the reaction deamido-NAD(+) + NH4(+) + ATP = AMP + diphosphate + NAD(+) + H(+). It participates in cofactor biosynthesis; NAD(+) biosynthesis; NAD(+) from deamido-NAD(+) (ammonia route): step 1/1. In terms of biological role, catalyzes the ATP-dependent amidation of deamido-NAD to form NAD. Uses ammonia as a nitrogen source. The protein is NH(3)-dependent NAD(+) synthetase of Lacticaseibacillus casei (strain BL23) (Lactobacillus casei).